A 149-amino-acid polypeptide reads, in one-letter code: UPF0178 protein VFMJ11_0615 (149 aa).

It belongs to the UPF0178 family.

This is UPF0178 protein VFMJ11_0615 from Aliivibrio fischeri (strain MJ11) (Vibrio fischeri).